We begin with the raw amino-acid sequence, 442 residues long: tRNA(Ile)-lysidine synthase (442 aa).

28–33 (SGGLDS) provides a ligand contact to ATP.

Belongs to the tRNA(Ile)-lysidine synthase family.

Its subcellular location is the cytoplasm. It catalyses the reaction cytidine(34) in tRNA(Ile2) + L-lysine + ATP = lysidine(34) in tRNA(Ile2) + AMP + diphosphate + H(+). Its function is as follows. Ligates lysine onto the cytidine present at position 34 of the AUA codon-specific tRNA(Ile) that contains the anticodon CAU, in an ATP-dependent manner. Cytidine is converted to lysidine, thus changing the amino acid specificity of the tRNA from methionine to isoleucine. This Pseudomonas aeruginosa (strain ATCC 15692 / DSM 22644 / CIP 104116 / JCM 14847 / LMG 12228 / 1C / PRS 101 / PAO1) protein is tRNA(Ile)-lysidine synthase.